A 271-amino-acid polypeptide reads, in one-letter code: MQFPHPGPAAAPAVGVPLYAPTPLLQPAHPTPFYIDDILGRGPAAPTPTPTLPSPNSSFTSLVSSYRTPVYEPTPVHPAFSHHPAAALAAAYGPSGFGGPLYPFPRTVNDYTHALLRHDPLGKPLLWSPFLQRPLHKRKGGQVRFSNDQTVELEKKFETQKYLSPPERKRLAKMLQLSERQVKTWFQNRRAKWRRLKQENPQSNKKDALDSLDTSCEQGQDLPSEQNKGASLDRSQCSPSPASQEDPDSEISEDSDQEVDIEGDKGYFNAG.

The segment at 1 to 138 (MQFPHPGPAA…PFLQRPLHKR (138 aa)) is interaction with SOX13. At Ser-54 the chain carries Phosphoserine. The homeobox DNA-binding region spans 138–197 (RKGGQVRFSNDQTVELEKKFETQKYLSPPERKRLAKMLQLSERQVKTWFQNRRAKWRRLK). The interval 138-271 (RKGGQVRFSN…EGDKGYFNAG (134 aa)) is required for WNT signaling induction. The tract at residues 195–271 (RLKQENPQSN…EGDKGYFNAG (77 aa)) is disordered. A compositionally biased stretch (polar residues) spans 212 to 242 (LDTSCEQGQDLPSEQNKGASLDRSQCSPSPA). Acidic residues predominate over residues 245–261 (EDPDSEISEDSDQEVDI).

In terms of assembly, interacts with CD81; the interaction prevents nuclear translocation of HHEX. Interacts (via N-terminus) with SOX13; abolishes the SOX13-mediated inhibition of WNT-mediated transcriptional activity via competitive inhibition of the SOX13-TCF7 complex. Interacts with EIF4E; the interaction inhibits EIF4E-mediated mRNA nuclear export.

Its subcellular location is the nucleus. The protein localises to the nuclear body. It localises to the cytoplasm. Functionally, recognizes the DNA sequence 5'-ATTAA-3'. Transcriptional repressor. Activator of WNT-mediated transcription in conjunction with CTNNB1. Establishes anterior identity at two levels; acts early to enhance canonical WNT-signaling by repressing expression of TLE4, and acts later to inhibit NODAL-signaling by directly targeting NODAL. Inhibits EIF4E-mediated mRNA nuclear export. May play a role in hematopoietic differentiation. The sequence is that of Hematopoietically-expressed homeobox protein Hhex (Hhex) from Mus musculus (Mouse).